Consider the following 221-residue polypeptide: ATP phosphoribosyltransferase (221 aa).

Belongs to the ATP phosphoribosyltransferase family. Short subfamily. In terms of assembly, heteromultimer composed of HisG and HisZ subunits.

It localises to the cytoplasm. It catalyses the reaction 1-(5-phospho-beta-D-ribosyl)-ATP + diphosphate = 5-phospho-alpha-D-ribose 1-diphosphate + ATP. It functions in the pathway amino-acid biosynthesis; L-histidine biosynthesis; L-histidine from 5-phospho-alpha-D-ribose 1-diphosphate: step 1/9. Catalyzes the condensation of ATP and 5-phosphoribose 1-diphosphate to form N'-(5'-phosphoribosyl)-ATP (PR-ATP). Has a crucial role in the pathway because the rate of histidine biosynthesis seems to be controlled primarily by regulation of HisG enzymatic activity. This Neisseria gonorrhoeae (strain ATCC 700825 / FA 1090) protein is ATP phosphoribosyltransferase.